Reading from the N-terminus, the 402-residue chain is UDP-glucose 6-dehydrogenase (402 aa).

NAD(+)-binding positions include 2–19 (KIAVAGSGYVGLSLGVLL), V11, D29, K34, T83, T118, and E145. Substrate-binding positions include 141–145 (EFLRE), K204, N208, 249–253 (YNNPS), and G257. Y259 contributes to the NAD(+) binding site. C260 serves as the catalytic Nucleophile. Residue K263 coordinates NAD(+). K320 lines the substrate pocket. An NAD(+)-binding site is contributed by R327.

This sequence belongs to the UDP-glucose/GDP-mannose dehydrogenase family.

It catalyses the reaction UDP-alpha-D-glucose + 2 NAD(+) + H2O = UDP-alpha-D-glucuronate + 2 NADH + 3 H(+). It participates in nucleotide-sugar biosynthesis; UDP-alpha-D-glucuronate biosynthesis; UDP-alpha-D-glucuronate from UDP-alpha-D-glucose: step 1/1. Functionally, catalyzes the formation of UDP-glucuronic acid which is required for capsular hyaluronic acid synthesis. This chain is UDP-glucose 6-dehydrogenase (hasB), found in Streptococcus pyogenes serotype M18 (strain MGAS8232).